Consider the following 1216-residue polypeptide: ATP-dependent helicase/nuclease subunit A (1216 aa).

One can recognise a UvrD-like helicase ATP-binding domain in the interval 26–488 (QKKTAEQIEA…IILKENFRSS (463 aa)). 47–54 (ASAGSGKT) contacts ATP. The 288-residue stretch at 515 to 802 (KHQLVFANTK…ELMTIHKSKG (288 aa)) folds into the UvrD-like helicase C-terminal domain.

Belongs to the helicase family. AddA subfamily. In terms of assembly, heterodimer of AddA and AddB/RexB. The cofactor is Mg(2+).

The enzyme catalyses Couples ATP hydrolysis with the unwinding of duplex DNA by translocating in the 3'-5' direction.. The catalysed reaction is ATP + H2O = ADP + phosphate + H(+). The heterodimer acts as both an ATP-dependent DNA helicase and an ATP-dependent, dual-direction single-stranded exonuclease. Recognizes the chi site generating a DNA molecule suitable for the initiation of homologous recombination. The AddA nuclease domain is required for chi fragment generation; this subunit has the helicase and 3' -&gt; 5' nuclease activities. The polypeptide is ATP-dependent helicase/nuclease subunit A (Streptococcus pneumoniae serotype 2 (strain D39 / NCTC 7466)).